Here is a 253-residue protein sequence, read N- to C-terminus: MLSRRIIPCLDVNAGRVVKGVRFQQLRDAGDPVACARAYDAQGADELIFLDITASSDERKIMHDVVAATAEQCFMPLTVGGGLRTVADIETMLKAGADKVSLNTAAIKNPQLIADAAERFGVQCIVVAIDAKREPDGQSWRVYTHGGRNPTELDAIAWARRAVELGAGEILLTSMDRDGTGDGYDLELTRGVSDAVSVPVIASGGAGTLQHLADVLDQGHASAVLAASIFHFGTYTIAQAKAFLGQRGVPVRS.

Residues Asp11 and Asp130 contribute to the active site.

The protein belongs to the HisA/HisF family. As to quaternary structure, heterodimer of HisH and HisF.

It localises to the cytoplasm. The catalysed reaction is 5-[(5-phospho-1-deoxy-D-ribulos-1-ylimino)methylamino]-1-(5-phospho-beta-D-ribosyl)imidazole-4-carboxamide + L-glutamine = D-erythro-1-(imidazol-4-yl)glycerol 3-phosphate + 5-amino-1-(5-phospho-beta-D-ribosyl)imidazole-4-carboxamide + L-glutamate + H(+). The protein operates within amino-acid biosynthesis; L-histidine biosynthesis; L-histidine from 5-phospho-alpha-D-ribose 1-diphosphate: step 5/9. In terms of biological role, IGPS catalyzes the conversion of PRFAR and glutamine to IGP, AICAR and glutamate. The HisF subunit catalyzes the cyclization activity that produces IGP and AICAR from PRFAR using the ammonia provided by the HisH subunit. This is Imidazole glycerol phosphate synthase subunit HisF from Opitutus terrae (strain DSM 11246 / JCM 15787 / PB90-1).